A 356-amino-acid polypeptide reads, in one-letter code: Phosphotriesterase-related protein (356 aa).

Residues histidine 23, histidine 25, glutamate 175, histidine 207, histidine 236, and aspartate 304 each contribute to the a divalent metal cation site.

The protein belongs to the metallo-dependent hydrolases superfamily. Phosphotriesterase family. Requires a divalent metal cation as cofactor.

This Aedes aegypti (Yellowfever mosquito) protein is Phosphotriesterase-related protein.